Here is a 310-residue protein sequence, read N- to C-terminus: MVRLDAITLKQLRALVAVAGSASLTGGATRLGLTPPAIHSQIRNLEEAFGVPLLHRPPETGSFTPTLAGIAVLEAAQRIEVILSQCSYQVMAVSEGRAGQVTLGVVSTGRYFAPRLVKMLSLACPEIRIALRVGNREQLIDDLARHMVDLAVMGRPPRQPEVASVALGPHPHGIVAPPDHPLAGLAEVPVPDLLSQTFLARAEGSGTRVLMSRYLDRLGEGQVVDLIEMDSNETIKQSVIAGLGLAFLSLHVVMDELRFGQLVQLAAPGLPIERHWFLVHPVDRPLNPAALRVQGEIVKLKGAYLPGAPA.

Positions 7-64 (ITLKQLRALVAVAGSASLTGGATRLGLTPPAIHSQIRNLEEAFGVPLLHRPPETGSFT) constitute an HTH lysR-type domain. Residues 24–43 (LTGGATRLGLTPPAIHSQIR) constitute a DNA-binding region (H-T-H motif).

This sequence belongs to the LysR transcriptional regulatory family.

Its function is as follows. Transcriptional activator for the cbb operon for RuBisCO and other Calvin cycle genes. The chain is HTH-type transcriptional regulator CbbR (cbbR) from Cereibacter sphaeroides (Rhodobacter sphaeroides).